We begin with the raw amino-acid sequence, 150 residues long: Monooxygenase nsrS (150 aa).

Belongs to the avfA family.

Its pathway is secondary metabolite biosynthesis. In terms of biological role, monooxygenase; part of the gene cluster that mediates the biosynthesis of the tetrahydroxanthone dimer neosartorin, which exhibits antibacterial activity. The two different monomeric units appear to be synthesized by the same set of enzymes, among which the Baeyer-Villiger monooxygenase nsrF is the key enzyme for the divergence of the biosynthetic routes. The pathway begins with the synthesis of atrochrysone thioester by the polyketide synthase nsrB. The atrochrysone carboxyl ACP thioesterase nsrC then breaks the thioester bond and releases the atrochrysone carboxylic acid from AacuL. Atrochrysone carboxylic acid is decarboxylated by the decarboxylase nsrE, and oxidized by the anthrone oxygenase nsrD to yield emodin. Emodin is then reduced to emodin hydroquinone by the oxidoreductase nsrR. A-ring reduction by the short chain dehydrogenase nsrJ, dehydration by the scytalone dehydratase-like protein nsrI and probable spontaneous re-oxidation, results in overall deoxygenation to chrysophanol. The Baeyer-Villiger monooxygenase nsrF accepts chrysophanol as a substrate to insert one oxygen atom at two different positions to yield the precursors of both monomric units. NsrF is promiscuous/flexible in interacting with the 2 (non methylated and methylated) aromatic rings of chrysophanol, thus diverging the biosynthetic pathway at this point. After the hydrolysis of the lactones, methylesterification by the methyltransferase nsrG yields respectively moniliphenone and 2,2',6'-trihydroxy-4-methyl-6-methoxya-cyldiphenylmethanone. The next steps are the hydroxylation by the FAD-dependent monooxygenase nsrK, followed by isomerization by the monooxygenase nsrQ. The short chain dehydrogenase/reductase nsrO then catalyzes the C-5 ketoreduction to give the xanthone skeleton of blennolide C and 5-acetylblennolide A. The acetyltransferase nsrL has a strict substrate specificity and uses only blennolide A but not blennolide C to yield 5-acetylblennolide A as the single-acetylated product. In the final step of the biosynthesis, the heterodimerization of the 2 xanthones, blennolide C and 5-acetylblennolide A, is catalyzed by the cytochrome P450 monooxygenase nsrP. NsrP can utilize at least three different xanthones as its substrates to perform the dimerization reaction. The chain is Monooxygenase nsrS from Aspergillus novofumigatus (strain IBT 16806).